The primary structure comprises 349 residues: NADH-quinone oxidoreductase subunit H (349 aa).

A run of 8 helical transmembrane segments spans residues 16 to 36 (WPVV…MGCV), 88 to 108 (GLFI…WAVV), 123 to 143 (LLFL…AGWA), 157 to 177 (AAQM…VLLI), 202 to 222 (FLSW…ISGI), 264 to 284 (ILVS…PVGF), 285 to 305 (LPDG…IFLW), and 325 to 345 (VFIP…MSPL).

Belongs to the complex I subunit 1 family. In terms of assembly, NDH-1 is composed of 14 different subunits. Subunits NuoA, H, J, K, L, M, N constitute the membrane sector of the complex.

The protein resides in the cell inner membrane. It carries out the reaction a quinone + NADH + 5 H(+)(in) = a quinol + NAD(+) + 4 H(+)(out). Functionally, NDH-1 shuttles electrons from NADH, via FMN and iron-sulfur (Fe-S) centers, to quinones in the respiratory chain. The immediate electron acceptor for the enzyme in this species is believed to be ubiquinone. Couples the redox reaction to proton translocation (for every two electrons transferred, four hydrogen ions are translocated across the cytoplasmic membrane), and thus conserves the redox energy in a proton gradient. This subunit may bind ubiquinone. The protein is NADH-quinone oxidoreductase subunit H of Azoarcus sp. (strain BH72).